The primary structure comprises 306 residues: D-aminoacyl-tRNA deacylase (306 aa).

This sequence belongs to the DtdA deacylase family. In terms of assembly, monomer. It depends on Zn(2+) as a cofactor.

The catalysed reaction is a D-aminoacyl-tRNA + H2O = a tRNA + a D-alpha-amino acid + H(+). The enzyme catalyses glycyl-tRNA(Ala) + H2O = tRNA(Ala) + glycine + H(+). In terms of biological role, D-aminoacyl-tRNA deacylase with broad substrate specificity. By recycling D-aminoacyl-tRNA to D-amino acids and free tRNA molecules, this enzyme counteracts the toxicity associated with the formation of D-aminoacyl-tRNA entities in vivo. The polypeptide is D-aminoacyl-tRNA deacylase (Methanosarcina barkeri (strain Fusaro / DSM 804)).